A 475-amino-acid chain; its full sequence is Ras-GEF domain-containing family member 1B-B (475 aa).

Polar residues predominate over residues 1–19 (MPQTTPYSSKFNPSAYSSS). The segment at 1–25 (MPQTTPYSSKFNPSAYSSSHSHRQP) is disordered. The region spanning 36–166 (RDNKLVSGSL…LIQRLLRKLT (131 aa)) is the N-terminal Ras-GEF domain. A Ras-GEF domain is found at 209–456 (DPFIFAQQLT…QLASYESEGP (248 aa)). The segment at 452–475 (ESEGPENNLERDTRRSLRSSLSRM) is disordered.

In terms of biological role, guanine nucleotide exchange factor (GEF) for Ras family proteins. The polypeptide is Ras-GEF domain-containing family member 1B-B (Danio rerio (Zebrafish)).